A 341-amino-acid polypeptide reads, in one-letter code: Farnesyl pyrophosphate synthase (341 aa).

Isopentenyl diphosphate is bound by residues Lys48, Arg51, and Gln86. 2 residues coordinate Mg(2+): Asp93 and Asp97. Arg102 contributes to the dimethylallyl diphosphate binding site. An isopentenyl diphosphate-binding site is contributed by Arg103. 4 residues coordinate dimethylallyl diphosphate: Lys190, Thr191, Gln229, and Lys246.

Belongs to the FPP/GGPP synthase family. Mg(2+) serves as cofactor.

It is found in the cytoplasm. The catalysed reaction is isopentenyl diphosphate + dimethylallyl diphosphate = (2E)-geranyl diphosphate + diphosphate. It catalyses the reaction isopentenyl diphosphate + (2E)-geranyl diphosphate = (2E,6E)-farnesyl diphosphate + diphosphate. It functions in the pathway isoprenoid biosynthesis; farnesyl diphosphate biosynthesis; farnesyl diphosphate from geranyl diphosphate and isopentenyl diphosphate: step 1/1. It participates in isoprenoid biosynthesis; geranyl diphosphate biosynthesis; geranyl diphosphate from dimethylallyl diphosphate and isopentenyl diphosphate: step 1/1. Its function is as follows. Catalyzes the sequential condensation of isopentenyl pyrophosphate with the allylic pyrophosphates, dimethylallyl pyrophosphate, and then with the resultant geranylpyrophosphate to the ultimate product farnesyl pyrophosphate. The polypeptide is Farnesyl pyrophosphate synthase (FPS1) (Helianthus annuus (Common sunflower)).